Consider the following 215-residue polypeptide: Cytochrome b6 (215 aa).

The chain crosses the membrane as a helical span at residues 32–52; sequence IFYCLGGVTLVCFIIQFATGF. Position 35 (Cys-35) interacts with heme c. 2 residues coordinate heme b: His-86 and His-100. 3 helical membrane passes run 90 to 110, 116 to 136, and 186 to 206; these read ASMM…TGGF, LTWI…VTGY, and LHTF…FLMI. Heme b contacts are provided by His-187 and His-202.

It belongs to the cytochrome b family. PetB subfamily. The 4 large subunits of the cytochrome b6-f complex are cytochrome b6, subunit IV (17 kDa polypeptide, PetD), cytochrome f and the Rieske protein, while the 4 small subunits are PetG, PetL, PetM and PetN. The complex functions as a dimer. It depends on heme b as a cofactor. Heme c serves as cofactor.

It is found in the cellular thylakoid membrane. Functionally, component of the cytochrome b6-f complex, which mediates electron transfer between photosystem II (PSII) and photosystem I (PSI), cyclic electron flow around PSI, and state transitions. In Acaryochloris marina (strain MBIC 11017), this protein is Cytochrome b6.